A 313-amino-acid chain; its full sequence is Malate dehydrogenase (313 aa).

NAD(+) contacts are provided by residues 8–13 (GAGNVG) and D33. Residues R83 and R89 each coordinate substrate. NAD(+)-binding positions include N96 and 119–121 (ISN). The substrate site is built by N121 and R152. H176 (proton acceptor) is an active-site residue.

The protein belongs to the LDH/MDH superfamily. MDH type 3 family.

It catalyses the reaction (S)-malate + NAD(+) = oxaloacetate + NADH + H(+). Catalyzes the reversible oxidation of malate to oxaloacetate. This Bacteroides fragilis (strain ATCC 25285 / DSM 2151 / CCUG 4856 / JCM 11019 / LMG 10263 / NCTC 9343 / Onslow / VPI 2553 / EN-2) protein is Malate dehydrogenase.